Consider the following 468-residue polypeptide: tRNA modification GTPase MnmE (468 aa).

(6S)-5-formyl-5,6,7,8-tetrahydrofolate is bound by residues R29, E97, and K136. The 159-residue stretch at 232–390 folds into the TrmE-type G domain; it reads GFELAIVGRP…VVAHIVARME (159 aa). N242 contributes to the K(+) binding site. Residues 242–247, 261–267, and 286–289 each bind GTP; these read NVGKSS, TDLAGTT, and DTAG. S246 contributes to the Mg(2+) binding site. Residues T261, L263, and T266 each contribute to the K(+) site. T267 contacts Mg(2+). K468 contacts (6S)-5-formyl-5,6,7,8-tetrahydrofolate.

It belongs to the TRAFAC class TrmE-Era-EngA-EngB-Septin-like GTPase superfamily. TrmE GTPase family. In terms of assembly, homodimer. Heterotetramer of two MnmE and two MnmG subunits. K(+) serves as cofactor.

The protein resides in the cytoplasm. Its function is as follows. Exhibits a very high intrinsic GTPase hydrolysis rate. Involved in the addition of a carboxymethylaminomethyl (cmnm) group at the wobble position (U34) of certain tRNAs, forming tRNA-cmnm(5)s(2)U34. The sequence is that of tRNA modification GTPase MnmE from Magnetococcus marinus (strain ATCC BAA-1437 / JCM 17883 / MC-1).